The following is an 87-amino-acid chain: Putative septation protein SpoVG (87 aa).

Belongs to the SpoVG family.

Its function is as follows. Could be involved in septation. This is Putative septation protein SpoVG from Agathobacter rectalis (strain ATCC 33656 / DSM 3377 / JCM 17463 / KCTC 5835 / VPI 0990) (Eubacterium rectale).